Reading from the N-terminus, the 309-residue chain is Ribonuclease Z (309 aa).

Residues H63, H65, D67, H68, H145, D216, and H274 each coordinate Zn(2+). The active-site Proton acceptor is the D67.

It belongs to the RNase Z family. In terms of assembly, homodimer. Zn(2+) is required as a cofactor.

The catalysed reaction is Endonucleolytic cleavage of RNA, removing extra 3' nucleotides from tRNA precursor, generating 3' termini of tRNAs. A 3'-hydroxy group is left at the tRNA terminus and a 5'-phosphoryl group is left at the trailer molecule.. Its function is as follows. Zinc phosphodiesterase, which displays some tRNA 3'-processing endonuclease activity. Probably involved in tRNA maturation, by removing a 3'-trailer from precursor tRNA. The chain is Ribonuclease Z from Streptococcus pneumoniae serotype 2 (strain D39 / NCTC 7466).